The sequence spans 72 residues: ATP synthase subunit c (72 aa).

Transmembrane regions (helical) follow at residues 1–21 (MSLG…GAGI) and 48–68 (MFIG…FSFI).

This sequence belongs to the ATPase C chain family. F-type ATPases have 2 components, F(1) - the catalytic core - and F(0) - the membrane proton channel. F(1) has five subunits: alpha(3), beta(3), gamma(1), delta(1), epsilon(1). F(0) has three main subunits: a(1), b(2) and c(10-14). The alpha and beta chains form an alternating ring which encloses part of the gamma chain. F(1) is attached to F(0) by a central stalk formed by the gamma and epsilon chains, while a peripheral stalk is formed by the delta and b chains.

The protein localises to the cell membrane. Functionally, f(1)F(0) ATP synthase produces ATP from ADP in the presence of a proton or sodium gradient. F-type ATPases consist of two structural domains, F(1) containing the extramembraneous catalytic core and F(0) containing the membrane proton channel, linked together by a central stalk and a peripheral stalk. During catalysis, ATP synthesis in the catalytic domain of F(1) is coupled via a rotary mechanism of the central stalk subunits to proton translocation. Key component of the F(0) channel; it plays a direct role in translocation across the membrane. A homomeric c-ring of between 10-14 subunits forms the central stalk rotor element with the F(1) delta and epsilon subunits. The sequence is that of ATP synthase subunit c from Geobacillus kaustophilus (strain HTA426).